Consider the following 486-residue polypeptide: Glutamyl-tRNA(Gln) amidotransferase subunit A (486 aa).

Catalysis depends on charge relay system residues lysine 79 and serine 154. The active-site Acyl-ester intermediate is the serine 178.

The protein belongs to the amidase family. GatA subfamily. Heterotrimer of A, B and C subunits.

It carries out the reaction L-glutamyl-tRNA(Gln) + L-glutamine + ATP + H2O = L-glutaminyl-tRNA(Gln) + L-glutamate + ADP + phosphate + H(+). Its function is as follows. Allows the formation of correctly charged Gln-tRNA(Gln) through the transamidation of misacylated Glu-tRNA(Gln) in organisms which lack glutaminyl-tRNA synthetase. The reaction takes place in the presence of glutamine and ATP through an activated gamma-phospho-Glu-tRNA(Gln). This is Glutamyl-tRNA(Gln) amidotransferase subunit A from Myxococcus xanthus (strain DK1622).